A 234-amino-acid chain; its full sequence is (5-formylfuran-3-yl)methyl phosphate synthase (234 aa).

Lys-27 acts as the Schiff-base intermediate with substrate in catalysis. The active-site Proton acceptor is the Lys-85.

Belongs to the MfnB family.

It carries out the reaction 2 D-glyceraldehyde 3-phosphate = 4-(hydroxymethyl)-2-furancarboxaldehyde phosphate + phosphate + 2 H2O. Its pathway is cofactor biosynthesis; methanofuran biosynthesis. Its function is as follows. Catalyzes the formation of 4-(hydroxymethyl)-2-furancarboxaldehyde phosphate (4-HFC-P) from two molecules of glyceraldehyde-3-P (GA-3-P). In Methanosarcina barkeri (strain Fusaro / DSM 804), this protein is (5-formylfuran-3-yl)methyl phosphate synthase.